A 135-amino-acid chain; its full sequence is Small ribosomal subunit protein bS16m/bS16c (135 aa).

The transit peptide at M1–L7 directs the protein to the chloroplast and mitochondrion. Residues P87–A135 form a disordered region. Residues Q124–A135 show a composition bias toward basic and acidic residues.

It belongs to the bacterial ribosomal protein bS16 family. Component of the mitochondrial ribosome small subunit. In terms of tissue distribution, expressed at low levels in flowers, and, to a lower extent, in leaves, stems and roots.

It is found in the mitochondrion. It localises to the plastid. The protein resides in the chloroplast. In Arabidopsis thaliana (Mouse-ear cress), this protein is Small ribosomal subunit protein bS16m/bS16c.